A 263-amino-acid polypeptide reads, in one-letter code: Fructose-bisphosphate aldolase class 1 (263 aa).

The active-site Schiff-base intermediate with dihydroxyacetone-P is the K177.

Belongs to the DeoC/FbaB aldolase family.

The enzyme catalyses beta-D-fructose 1,6-bisphosphate = D-glyceraldehyde 3-phosphate + dihydroxyacetone phosphate. Its function is as follows. Has aldolase activity with fructose 1,6-bisphosphate. May play a role in the biosynthesis of aromatic amino acids (AroAA). The chain is Fructose-bisphosphate aldolase class 1 (fba1) from Halobacterium salinarum (strain ATCC 29341 / DSM 671 / R1).